The chain runs to 108 residues: Protein FATTY ACID EXPORT 7 (108 aa).

Helical transmembrane passes span 32-52, 55-75, and 85-105; these read ISLV…TELP, PVLA…MMGS, and PAGL…HGLI.

The protein belongs to the TMEM14 family.

The protein localises to the membrane. In terms of biological role, may be involved in free fatty acids export. The protein is Protein FATTY ACID EXPORT 7 of Arabidopsis thaliana (Mouse-ear cress).